The following is a 336-amino-acid chain: MSAQVIAIDAMGGDFGPRSIVQASIACLSATPSLHLTLVGQPSLLEELISGQTAVDRARLTITPASEVITMDEKPSQALRGKPDSSMRVALELLRDEKVQACVSAGNTGALMALSRYVLKTLPGIDRPAMVAAIPTQRGYCQLLDLGANVDCSAEHLLQFAVMGSVAAETLGIVRPRVALLNIGTEDIKGNQQVKLAASLLQQARGLNYIGFVEGDGLYRGEADVVVCDGFVGNILLKSSEGLATMIAARIEALFRQNLLSRAVGALALPLMRRLQADLAPARHNGASFLGLQGIVVKSHGSAGVQGFQSAIQRALIEIQEDLPRRLHGRLEDLLL.

Belongs to the PlsX family. In terms of assembly, homodimer. Probably interacts with PlsY.

Its subcellular location is the cytoplasm. The catalysed reaction is a fatty acyl-[ACP] + phosphate = an acyl phosphate + holo-[ACP]. It participates in lipid metabolism; phospholipid metabolism. Catalyzes the reversible formation of acyl-phosphate (acyl-PO(4)) from acyl-[acyl-carrier-protein] (acyl-ACP). This enzyme utilizes acyl-ACP as fatty acyl donor, but not acyl-CoA. This Pseudomonas fluorescens (strain ATCC BAA-477 / NRRL B-23932 / Pf-5) protein is Phosphate acyltransferase.